The chain runs to 208 residues: Putative speedy protein E7 (208 aa).

This sequence belongs to the Speedy/Ringo family.

This Homo sapiens (Human) protein is Putative speedy protein E7 (SPDYE7P).